The sequence spans 208 residues: MKNDNLKEQYRINERIRVREVRLVGDNIETGVYPIAQALKIAEEQGMDLVEISPNAAPPVCRVIDYQKFLYQQKKRQKEQKAKSVKVVVKEIRFGPQTDDHDYNFKLKHAKGFLEEGSKVKAYVFFKGRSILFKEQGEVLLLRFANDLEDYGKVEQLPVLEGKRMIIMLTPKKAGTGSAPAAAAAPKVVKKVITTPKPKSEGDKKTEE.

This sequence belongs to the IF-3 family. In terms of assembly, monomer.

It is found in the cytoplasm. IF-3 binds to the 30S ribosomal subunit and shifts the equilibrium between 70S ribosomes and their 50S and 30S subunits in favor of the free subunits, thus enhancing the availability of 30S subunits on which protein synthesis initiation begins. This is Translation initiation factor IF-3 from Parabacteroides distasonis (strain ATCC 8503 / DSM 20701 / CIP 104284 / JCM 5825 / NCTC 11152).